A 580-amino-acid chain; its full sequence is Proline--tRNA ligase (580 aa).

It belongs to the class-II aminoacyl-tRNA synthetase family. ProS type 1 subfamily. In terms of assembly, homodimer.

It is found in the cytoplasm. The enzyme catalyses tRNA(Pro) + L-proline + ATP = L-prolyl-tRNA(Pro) + AMP + diphosphate. Its function is as follows. Catalyzes the attachment of proline to tRNA(Pro) in a two-step reaction: proline is first activated by ATP to form Pro-AMP and then transferred to the acceptor end of tRNA(Pro). As ProRS can inadvertently accommodate and process non-cognate amino acids such as alanine and cysteine, to avoid such errors it has two additional distinct editing activities against alanine. One activity is designated as 'pretransfer' editing and involves the tRNA(Pro)-independent hydrolysis of activated Ala-AMP. The other activity is designated 'posttransfer' editing and involves deacylation of mischarged Ala-tRNA(Pro). The misacylated Cys-tRNA(Pro) is not edited by ProRS. In Mycobacteroides abscessus (strain ATCC 19977 / DSM 44196 / CCUG 20993 / CIP 104536 / JCM 13569 / NCTC 13031 / TMC 1543 / L948) (Mycobacterium abscessus), this protein is Proline--tRNA ligase.